Reading from the N-terminus, the 338-residue chain is Glycerol-3-phosphate dehydrogenase [NAD(P)+] (338 aa).

NADPH is bound by residues Ser-13, Trp-14, and Lys-108. Sn-glycerol 3-phosphate-binding residues include Lys-108, Gly-139, and Ser-141. NADPH is bound at residue Ala-143. Residues Lys-194, Asp-247, Ser-257, Arg-258, and Asn-259 each contribute to the sn-glycerol 3-phosphate site. Lys-194 serves as the catalytic Proton acceptor. Arg-258 provides a ligand contact to NADPH. 2 residues coordinate NADPH: Val-282 and Glu-284.

This sequence belongs to the NAD-dependent glycerol-3-phosphate dehydrogenase family.

It is found in the cytoplasm. The catalysed reaction is sn-glycerol 3-phosphate + NAD(+) = dihydroxyacetone phosphate + NADH + H(+). It catalyses the reaction sn-glycerol 3-phosphate + NADP(+) = dihydroxyacetone phosphate + NADPH + H(+). It functions in the pathway membrane lipid metabolism; glycerophospholipid metabolism. Catalyzes the reduction of the glycolytic intermediate dihydroxyacetone phosphate (DHAP) to sn-glycerol 3-phosphate (G3P), the key precursor for phospholipid synthesis. This chain is Glycerol-3-phosphate dehydrogenase [NAD(P)+], found in Streptococcus pneumoniae (strain CGSP14).